The following is a 270-amino-acid chain: Putative pyruvate, phosphate dikinase regulatory protein (270 aa).

Position 148–155 (148–155 (GISRTSKT)) interacts with ADP.

Belongs to the pyruvate, phosphate/water dikinase regulatory protein family. PDRP subfamily.

It carries out the reaction N(tele)-phospho-L-histidyl/L-threonyl-[pyruvate, phosphate dikinase] + ADP = N(tele)-phospho-L-histidyl/O-phospho-L-threonyl-[pyruvate, phosphate dikinase] + AMP + H(+). The enzyme catalyses N(tele)-phospho-L-histidyl/O-phospho-L-threonyl-[pyruvate, phosphate dikinase] + phosphate + H(+) = N(tele)-phospho-L-histidyl/L-threonyl-[pyruvate, phosphate dikinase] + diphosphate. In terms of biological role, bifunctional serine/threonine kinase and phosphorylase involved in the regulation of the pyruvate, phosphate dikinase (PPDK) by catalyzing its phosphorylation/dephosphorylation. The protein is Putative pyruvate, phosphate dikinase regulatory protein of Bacillus mycoides (strain KBAB4) (Bacillus weihenstephanensis).